Consider the following 177-residue polypeptide: Large ribosomal subunit protein uL10 (177 aa).

This sequence belongs to the universal ribosomal protein uL10 family. As to quaternary structure, part of the ribosomal stalk of the 50S ribosomal subunit. The N-terminus interacts with L11 and the large rRNA to form the base of the stalk. The C-terminus forms an elongated spine to which L12 dimers bind in a sequential fashion forming a multimeric L10(L12)X complex.

Functionally, forms part of the ribosomal stalk, playing a central role in the interaction of the ribosome with GTP-bound translation factors. The polypeptide is Large ribosomal subunit protein uL10 (Caldanaerobacter subterraneus subsp. tengcongensis (strain DSM 15242 / JCM 11007 / NBRC 100824 / MB4) (Thermoanaerobacter tengcongensis)).